The primary structure comprises 58 residues: Large ribosomal subunit protein uL30 (58 aa).

This sequence belongs to the universal ribosomal protein uL30 family. In terms of assembly, part of the 50S ribosomal subunit.

The protein is Large ribosomal subunit protein uL30 of Porphyromonas gingivalis (strain ATCC 33277 / DSM 20709 / CIP 103683 / JCM 12257 / NCTC 11834 / 2561).